Consider the following 267-residue polypeptide: MTKTKIMGILNVTPDSFSDGGKFNNVETAINRVKAMIDEGADIIDVGGVSTRPGHEMVTLEEELNRVLPVVEAIVGFDVKISVDTFRSEVAEACLKLGVDMINDQWAGLYDHRMFQIVAKYDAEIILMHNGNGNRDEPVVEEMLTSLLAQAHQAKIAGIPSNKIWLDPGIGFAKTRNEEAEVMARLDELVATEYPVLLATSRKRFTKEMMGYDTTPVERDEVTAATTAYGIMKGVRAVRVHNVELNAKLAKGIDFLKENENARHNLS.

Residues 1–251 enclose the Pterin-binding domain; it reads MTKTKIMGIL…NVELNAKLAK (251 aa). Mg(2+) is bound at residue asparagine 11. (7,8-dihydropterin-6-yl)methyl diphosphate is bound by residues threonine 51, aspartate 84, asparagine 103, aspartate 167, lysine 203, and 239 to 241; that span reads RVH.

Belongs to the DHPS family. Homodimer. Requires Mg(2+) as cofactor.

The enzyme catalyses (7,8-dihydropterin-6-yl)methyl diphosphate + 4-aminobenzoate = 7,8-dihydropteroate + diphosphate. It participates in cofactor biosynthesis; tetrahydrofolate biosynthesis; 7,8-dihydrofolate from 2-amino-4-hydroxy-6-hydroxymethyl-7,8-dihydropteridine diphosphate and 4-aminobenzoate: step 1/2. Functionally, catalyzes the condensation of para-aminobenzoate (pABA) with 6-hydroxymethyl-7,8-dihydropterin diphosphate (DHPt-PP) to form 7,8-dihydropteroate (H2Pte), the immediate precursor of folate derivatives. This is Dihydropteroate synthase (folP) from Staphylococcus aureus (strain Mu50 / ATCC 700699).